The sequence spans 442 residues: tRNA modification GTPase MnmE (442 aa).

Arg21, Glu79, and Lys118 together coordinate (6S)-5-formyl-5,6,7,8-tetrahydrofolate. A TrmE-type G domain is found at 214–367 (GFKIAIIGKP…LKEELQNYLN (154 aa)). A K(+)-binding site is contributed by Asn224. Residues 224–229 (NVGKSS), 243–249 (SDIAGTT), and 268–271 (DTAG) contribute to the GTP site. Ser228 contacts Mg(2+). Ser243, Ile245, and Thr248 together coordinate K(+). Thr249 contacts Mg(2+). Lys442 serves as a coordination point for (6S)-5-formyl-5,6,7,8-tetrahydrofolate.

This sequence belongs to the TRAFAC class TrmE-Era-EngA-EngB-Septin-like GTPase superfamily. TrmE GTPase family. Homodimer. Heterotetramer of two MnmE and two MnmG subunits. It depends on K(+) as a cofactor.

The protein localises to the cytoplasm. Functionally, exhibits a very high intrinsic GTPase hydrolysis rate. Involved in the addition of a carboxymethylaminomethyl (cmnm) group at the wobble position (U34) of certain tRNAs, forming tRNA-cmnm(5)s(2)U34. The polypeptide is tRNA modification GTPase MnmE (Campylobacter jejuni subsp. doylei (strain ATCC BAA-1458 / RM4099 / 269.97)).